The following is a 182-amino-acid chain: Translation initiation factor IF-3 (182 aa).

This sequence belongs to the IF-3 family. Monomer.

It localises to the cytoplasm. Functionally, IF-3 binds to the 30S ribosomal subunit and shifts the equilibrium between 70S ribosomes and their 50S and 30S subunits in favor of the free subunits, thus enhancing the availability of 30S subunits on which protein synthesis initiation begins. This is Translation initiation factor IF-3 from Endomicrobium trichonymphae.